The following is a 27-amino-acid chain: uncharacterized protein (27 aa).

This is an uncharacterized protein from Escherichia coli (strain K12).